The following is a 187-amino-acid chain: Bifunctional protein PyrR (187 aa).

The short motif at 109 to 121 is the PRPP-binding element; sequence VILVDDVLYSGRS.

The protein belongs to the purine/pyrimidine phosphoribosyltransferase family. PyrR subfamily.

The enzyme catalyses UMP + diphosphate = 5-phospho-alpha-D-ribose 1-diphosphate + uracil. Functionally, regulates the transcription of the pyrimidine nucleotide (pyr) operon in response to exogenous pyrimidines. Its function is as follows. Also displays a weak uracil phosphoribosyltransferase activity which is not physiologically significant. This Mycobacterium ulcerans (strain Agy99) protein is Bifunctional protein PyrR.